Consider the following 197-residue polypeptide: Methylamine utilization protein MauD (197 aa).

A helical transmembrane segment spans residues 3–23 (FLIASNILLWIAFLGVTVVML). In terms of domain architecture, Thioredoxin spans 48–180 (PDIGDMAPEF…LESLLEADKT (133 aa)).

The protein resides in the membrane. The protein operates within one-carbon metabolism; methylamine degradation. In terms of biological role, may be specifically involved in the processing, transport, and/or maturation of the MADH beta-subunit. This Paracoccus versutus (Thiobacillus versutus) protein is Methylamine utilization protein MauD (mauD).